A 360-amino-acid chain; its full sequence is Peptide chain release factor 1 (360 aa).

Q235 carries the N5-methylglutamine modification. The interval 286–311 (QAQAQADTRRNLLGSGDRSDKIRTYN) is disordered.

It belongs to the prokaryotic/mitochondrial release factor family. Methylated by PrmC. Methylation increases the termination efficiency of RF1.

It is found in the cytoplasm. Peptide chain release factor 1 directs the termination of translation in response to the peptide chain termination codons UAG and UAA. The polypeptide is Peptide chain release factor 1 (Histophilus somni (strain 2336) (Haemophilus somnus)).